We begin with the raw amino-acid sequence, 595 residues long: Glutamyl-tRNA(Gln) amidotransferase subunit B, mitochondrial (595 aa).

The N-terminal 114 residues, 1–114 (MPRLWYSRYL…RAPTSTVAEP (114 aa)), are a transit peptide targeting the mitochondrion. The disordered stretch occupies residues 59-78 (KEEAKRSKSQSRNGRGKKQV).

Belongs to the GatB/GatE family. GatB subfamily. Subunit of the heterotrimeric GatCAB amidotransferase (AdT) complex, composed of A, B and C subunits.

Its subcellular location is the mitochondrion. It carries out the reaction L-glutamyl-tRNA(Gln) + L-glutamine + ATP + H2O = L-glutaminyl-tRNA(Gln) + L-glutamate + ADP + phosphate + H(+). In terms of biological role, allows the formation of correctly charged Gln-tRNA(Gln) through the transamidation of misacylated Glu-tRNA(Gln) in the mitochondria. The reaction takes place in the presence of glutamine and ATP through an activated gamma-phospho-Glu-tRNA(Gln). The polypeptide is Glutamyl-tRNA(Gln) amidotransferase subunit B, mitochondrial (Talaromyces stipitatus (strain ATCC 10500 / CBS 375.48 / QM 6759 / NRRL 1006) (Penicillium stipitatum)).